Reading from the N-terminus, the 400-residue chain is Delta(12) fatty acid desaturase (400 aa).

Residues 91–111 traverse the membrane as a helical segment; sequence LAWPAYWIMQGIVCTGIWVLA. The Histidine box-1 signature appears at 112–116; sequence HECGH. The short motif at 148–152 is the Histidine box-2 element; the sequence is HSKHH. 3 helical membrane passes run 199 to 219, 245 to 265, and 277 to 297; these read IVTL…YLIM, FFDI…LIYA, and YYIV…FLQH. A Histidine box-3 motif is present at residues 339–343; sequence HVAHH.

This sequence belongs to the fatty acid desaturase type 1 family.

It is found in the membrane. It catalyses the reaction (9Z)-octadecenoyl-CoA + 2 Fe(II)-[cytochrome b5] + O2 + 2 H(+) = (9Z,12Z)-octadecadienoyl-CoA + 2 Fe(III)-[cytochrome b5] + 2 H2O. The catalysed reaction is (9Z)-hexadecenoyl-CoA + 2 Fe(II)-[cytochrome b5] + O2 + 2 H(+) = (9Z,12Z)-hexadecadienoyl-CoA + 2 Fe(III)-[cytochrome b5] + 2 H2O. The protein operates within lipid metabolism; polyunsaturated fatty acid biosynthesis. Functionally, catalyzes the desaturation of oleic acid (Delta(9)-18:1) to linoleic acid (Delta(9), Delta(12)-18:2). In Mortierella alpina (Oleaginous fungus), this protein is Delta(12) fatty acid desaturase.